A 172-amino-acid polypeptide reads, in one-letter code: Translation initiation factor IF-3 (172 aa).

The protein belongs to the IF-3 family. In terms of assembly, monomer.

It localises to the cytoplasm. Functionally, IF-3 binds to the 30S ribosomal subunit and shifts the equilibrium between 70S ribosomes and their 50S and 30S subunits in favor of the free subunits, thus enhancing the availability of 30S subunits on which protein synthesis initiation begins. This is Translation initiation factor IF-3 from Sulfurimonas denitrificans (strain ATCC 33889 / DSM 1251) (Thiomicrospira denitrificans (strain ATCC 33889 / DSM 1251)).